The primary structure comprises 249 residues: Fatty acid elongase 5 (249 aa).

3 helical membrane-spanning segments follow: residues 23–43 (VFVNYPVLIGCHIGYLVVIVL), 68–88 (VALSLVMAINLGQFLVYGVFN), and 100–120 (WIFVHYATKFLDMFDTYFIVL). Positions 131 to 135 (HIYHH) match the HxxHH motif motif. Histidine 134 functions as the Nucleophile in the catalytic mechanism. 4 helical membrane passes run 138–158 (IGFIWGLLLHHGVANGTAFFG), 159–179 (AWINSAVHALMYFHYLYTSLG), 193–213 (MIQFALCILHAVLAVVAHSPI), and 217–236 (WAVLQLCYHLTLLYLFMRFY).

This sequence belongs to the ELO family.

It localises to the membrane. It carries out the reaction an acyl-CoA + malonyl-CoA + H(+) = a 3-oxoacyl-CoA + CO2 + CoA. It participates in lipid metabolism; polyunsaturated fatty acid biosynthesis. Functionally, involved in the synthesis of fatty acids. Elongates C20 polyunsaturated fatty acids (PUFAs) with a preference for n-6 PUFAs. The protein is Fatty acid elongase 5 of Leishmania major.